The following is a 969-amino-acid chain: RNA polymerase-associated protein RapA (969 aa).

Residues 162-339 form the Helicase ATP-binding domain; it reads EVGQRVAPRV…FARLALLDAD (178 aa). Residue 175–182 coordinates ATP; sequence DEVGLGKT. Positions 285 to 288 match the DEAH box motif; sequence DEAH. In terms of domain architecture, Helicase C-terminal spans 492–663; that stretch reads RIEWLITFLK…GFLKNPQAVG (172 aa).

It belongs to the SNF2/RAD54 helicase family. RapA subfamily. As to quaternary structure, interacts with the RNAP. Has a higher affinity for the core RNAP than for the holoenzyme. Its ATPase activity is stimulated by binding to RNAP.

Transcription regulator that activates transcription by stimulating RNA polymerase (RNAP) recycling in case of stress conditions such as supercoiled DNA or high salt concentrations. Probably acts by releasing the RNAP, when it is trapped or immobilized on tightly supercoiled DNA. Does not activate transcription on linear DNA. Probably not involved in DNA repair. This is RNA polymerase-associated protein RapA from Actinobacillus pleuropneumoniae serotype 5b (strain L20).